Here is a 654-residue protein sequence, read N- to C-terminus: tRNA 5-methylaminomethyl-2-thiouridine biosynthesis bifunctional protein MnmC (654 aa).

Residues 1 to 236 (MPTLLQHAQI…KWEVMSGAYV (236 aa)) are tRNA (mnm(5)s(2)U34)-methyltransferase. The FAD-dependent cmnm(5)s(2)U34 oxidoreductase stretch occupies residues 262-654 (IGAGLAGSSS…FGLRRLIRGK (393 aa)).

This sequence in the N-terminal section; belongs to the methyltransferase superfamily. tRNA (mnm(5)s(2)U34)-methyltransferase family. The protein in the C-terminal section; belongs to the DAO family. The cofactor is FAD.

The protein resides in the cytoplasm. It carries out the reaction 5-aminomethyl-2-thiouridine(34) in tRNA + S-adenosyl-L-methionine = 5-methylaminomethyl-2-thiouridine(34) in tRNA + S-adenosyl-L-homocysteine + H(+). Catalyzes the last two steps in the biosynthesis of 5-methylaminomethyl-2-thiouridine (mnm(5)s(2)U) at the wobble position (U34) in tRNA. Catalyzes the FAD-dependent demodification of cmnm(5)s(2)U34 to nm(5)s(2)U34, followed by the transfer of a methyl group from S-adenosyl-L-methionine to nm(5)s(2)U34, to form mnm(5)s(2)U34. The protein is tRNA 5-methylaminomethyl-2-thiouridine biosynthesis bifunctional protein MnmC of Pseudomonas putida (strain ATCC 47054 / DSM 6125 / CFBP 8728 / NCIMB 11950 / KT2440).